We begin with the raw amino-acid sequence, 468 residues long: O-methyltransferase lcsG (468 aa).

The segment covering 1-12 (MGDNVQSDTTAA) has biased composition (polar residues). Residues 1–29 (MGDNVQSDTTAAQAGITDAPTAPTSAPVS) form a disordered region. Residues 298–299 (GG), D321, 348–349 (DF), and K363 each bind S-adenosyl-L-methionine.

This sequence belongs to the class I-like SAM-binding methyltransferase superfamily. Cation-independent O-methyltransferase family.

The protein operates within secondary metabolite biosynthesis. In terms of biological role, O-methyltransferase; part of the gene cluster that mediates the biosynthesis of the lipopeptide antibiotics leucinostatins that show extensive biological activities, including antimalarial, antiviral, antibacterial, antifungal, and antitumor activities, as well as phytotoxic. Leucinostatin A contains nine amino acid residues, including the unusual amino acid 4-methyl-L-proline (MePro), 2-amino-6-hydroxy-4-methyl-8-oxodecanoic acid (AHyMeOA), 3-hydroxyleucine (HyLeu), alpha-aminoisobutyric acid (AIB), beta-Ala, a 4-methylhex-2-enoic acid at the N-terminus as well as a N1,N1-dimethylpropane-1,2-diamine (DPD) at the C-terminus. The biosynthesis of leucinostatins is probably initiated with the assembly of 4-methylhex-2-enoic acid by a reducing PKS. Two reducing polyketide synthases, lcsB and lcsC, have been identified in the cluster and it is not clear which is the one that assembles 4-methylhex-2-enoic acid since both contain KS, AT, DH, cMT, ER, KR and ACP domains. The polyketide residue might be transferred to the NRPS lcsA, mediated by two additional enzymes, the acyl-CoA ligase lcsD and the thioesterase lcsE. The linear polyketide carboxylic acid, which is released from PKS, is converted to a CoA thioester by lcsD, and then lcsE hydrolyzes the thiol bond and shuttles the polyketide intermediate to lcsA. The C domain of the first module catalyzed the condensation of 4-methylhex-2-enoic acid and MePro carried by domain A1, followed by successive condensations of nine amino acids to trigger the elongation of the linear peptide. A5 and A6 domains of lcsA are proposed to incorporate leucine, A2 AHyMeOA, and A3 incorporates HyLeu. A4, A7 and A8 incorporate AIB. The AHyMeOA in leucinostatin A activated by the A2 might be produced by the second PKS (lcsB or lcsC) present within the cluster. The MePro is probably produced via leucine cyclization and may originate from a separate pathway, independent of the cluster. Another nonproteinogenic amino acid, beta-Ala, could be produced by an aspartic acid decarboxylase also localized outside of the cluster. Two candidates are VFPBJ_01400 and VFPBJ_10476. The final peptide scaffold may be released by the NAD(P)H-dependent thioester reductase (TE) at the C-terminal region of lcsA. Transamination of the lcsA product by the transaminase lcsP may produce DPD at the C-terminus. Further hydroxylation steps performed alternatively by the cytochrome P450 monooxygenases lcsI, lcsK and lcsN then yield the non-methylated leucinostatins precursor. It is also possible that leucines can be hydroxylated prior to their incorporation into the peptide. Varying extents of methylation then lead to the formation of leucinostatins A and B. The protein is O-methyltransferase lcsG of Purpureocillium lilacinum (Paecilomyces lilacinus).